Reading from the N-terminus, the 146-residue chain is uncharacterized protein (146 aa).

The disordered stretch occupies residues 67 to 93 (DDNGMESGFCSGATSTGQSASTSPAPV). The span at 77–92 (SGATSTGQSASTSPAP) shows a compositional bias: low complexity.

This is an uncharacterized protein from Caenorhabditis elegans.